The sequence spans 79 residues: Conotoxin Vi6.9 (79 aa).

A signal peptide spans 1 to 22; that stretch reads MKLTCMVIITVLFLTASQLITA. The propeptide occupies 23–47; the sequence is DYSRDQRQYRAVRLGDEMRNFKGAR. Cystine bridges form between cysteine 49–cysteine 62, cysteine 56–cysteine 67, and cysteine 61–cysteine 77. 4-hydroxyproline occurs at positions 60 and 63.

The protein belongs to the conotoxin O1 superfamily. Expressed by the venom duct.

Its subcellular location is the secreted. In terms of biological role, ion channel inhibitor that inhibits the increase in intracellular calcium upon depolarization in DRG neurons. In vivo, both intraperitoneal and intracranial injections into mice induce hyperactivity. This chain is Conotoxin Vi6.9, found in Conus virgo (Virgin cone).